The chain runs to 133 residues: Small ribosomal subunit protein uS8 (133 aa).

Belongs to the universal ribosomal protein uS8 family. In terms of assembly, part of the 30S ribosomal subunit.

One of the primary rRNA binding proteins, it binds directly to 16S rRNA central domain where it helps coordinate assembly of the platform of the 30S subunit. This Metallosphaera sedula (strain ATCC 51363 / DSM 5348 / JCM 9185 / NBRC 15509 / TH2) protein is Small ribosomal subunit protein uS8.